The following is a 425-amino-acid chain: Ribulose bisphosphate carboxylase (425 aa).

Catalysis depends on Lys153, which acts as the Proton acceptor. Lys155 lines the substrate pocket. Lys179, Asp181, and Glu182 together coordinate Mg(2+). Lys179 is modified (N6-carboxylysine). Residue His269 is the Proton acceptor of the active site. Substrate-binding positions include Arg270, His302, 353-355 (SGG), and 375-378 (QAGG).

This sequence belongs to the RuBisCO large chain family. Type III subfamily. As to quaternary structure, homodimer. In contrast to form I RuBisCO, the form III RuBisCO is composed solely of large subunits. The cofactor is Mg(2+).

It catalyses the reaction 2 (2R)-3-phosphoglycerate + 2 H(+) = D-ribulose 1,5-bisphosphate + CO2 + H2O. The catalysed reaction is D-ribulose 1,5-bisphosphate + O2 = 2-phosphoglycolate + (2R)-3-phosphoglycerate + 2 H(+). Its activity is regulated as follows. Reversibly inhibited by O(2). Catalyzes the addition of molecular CO(2) and H(2)O to ribulose 1,5-bisphosphate (RuBP), generating two molecules of 3-phosphoglycerate (3-PGA). Functions in an archaeal AMP degradation pathway, together with AMP phosphorylase and R15P isomerase. This chain is Ribulose bisphosphate carboxylase, found in Methanocaldococcus jannaschii (strain ATCC 43067 / DSM 2661 / JAL-1 / JCM 10045 / NBRC 100440) (Methanococcus jannaschii).